The chain runs to 163 residues: Nucleotide-binding protein GTNG_0630 (163 aa).

The protein belongs to the YajQ family.

Nucleotide-binding protein. This is Nucleotide-binding protein GTNG_0630 from Geobacillus thermodenitrificans (strain NG80-2).